The following is a 287-amino-acid chain: MKKINVVYNPAFNPISSKLNQTQLLKNASEELDIELKFFTSFDINTTKAKANLPFISNKILFMDKNIALARWLESNGFEVINSSIGINNADNKGLSHAIIAQYPFIKQIKTLLGPQNFDREWNPVMLDVFINQIKQSMEFPVIVKSVFGSFGDYVFLCLDEQKLRKTLMSFNQQAIVQKYITCSKGESVRVIVVNNKVIGALHTTNNSDFRSNLNKGAKAERFFLNKEQENLAVKISKVMQLFYCGIDFLFDQDRSLIFCEVNPNVQLTRSSMYLNTNLAIELLKAI.

The 173-residue stretch at 115–287 folds into the ATP-grasp domain; sequence PQNFDREWNP…NLAIELLKAI (173 aa). ATP-binding positions include K145 and 178 to 188; that span reads QKYITCSKGES. Positions 248, 261, and 263 each coordinate Mg(2+). The Mn(2+) site is built by D248, E261, and N263.

The protein belongs to the RimK family.

This is an uncharacterized protein from Mycoplasma genitalium (strain ATCC 33530 / DSM 19775 / NCTC 10195 / G37) (Mycoplasmoides genitalium).